The primary structure comprises 361 residues: RNA 3'-terminal phosphate cyclase (361 aa).

ATP-binding positions include Gln109 and 293-297 (HLADQ). Residue His319 is the Tele-AMP-histidine intermediate of the active site.

Belongs to the RNA 3'-terminal cyclase family. Type 1 subfamily.

Its subcellular location is the cytoplasm. It catalyses the reaction a 3'-end 3'-phospho-ribonucleotide-RNA + ATP = a 3'-end 2',3'-cyclophospho-ribonucleotide-RNA + AMP + diphosphate. Functionally, catalyzes the conversion of 3'-phosphate to a 2',3'-cyclic phosphodiester at the end of RNA. The mechanism of action of the enzyme occurs in 3 steps: (A) adenylation of the enzyme by ATP; (B) transfer of adenylate to an RNA-N3'P to produce RNA-N3'PP5'A; (C) and attack of the adjacent 2'-hydroxyl on the 3'-phosphorus in the diester linkage to produce the cyclic end product. The biological role of this enzyme is unknown but it is likely to function in some aspects of cellular RNA processing. This Methylococcus capsulatus (strain ATCC 33009 / NCIMB 11132 / Bath) protein is RNA 3'-terminal phosphate cyclase.